The sequence spans 713 residues: Phenylalanine--tRNA ligase beta subunit (713 aa).

A tRNA-binding domain is found at 39–153 (IRHVENIKYG…EANLNEDPIA (115 aa)). The B5 domain maps to 379-454 (LKPKEILFDH…RFYGYDNFPI (76 aa)). Asp-432, Asp-438, Glu-441, and Glu-442 together coordinate Mg(2+).

It belongs to the phenylalanyl-tRNA synthetase beta subunit family. Type 1 subfamily. Tetramer of two alpha and two beta subunits. It depends on Mg(2+) as a cofactor.

The protein localises to the cytoplasm. The enzyme catalyses tRNA(Phe) + L-phenylalanine + ATP = L-phenylalanyl-tRNA(Phe) + AMP + diphosphate + H(+). This chain is Phenylalanine--tRNA ligase beta subunit, found in Mycoplasma mobile (strain ATCC 43663 / 163K / NCTC 11711) (Mesomycoplasma mobile).